The primary structure comprises 210 residues: Outer-membrane lipoprotein LolB (210 aa).

Positions 1–18 are cleaved as a signal peptide; that stretch reads MKKFTKILSLSTLLFLAG. Cysteine 19 carries N-palmitoyl cysteine lipidation. A lipid anchor (S-diacylglycerol cysteine) is attached at cysteine 19.

The protein belongs to the LolB family. As to quaternary structure, monomer.

It is found in the cell outer membrane. In terms of biological role, plays a critical role in the incorporation of lipoproteins in the outer membrane after they are released by the LolA protein. The sequence is that of Outer-membrane lipoprotein LolB from Actinobacillus pleuropneumoniae serotype 5b (strain L20).